The sequence spans 157 residues: Large ribosomal subunit protein eL24 (157 aa).

Positions 94 to 157 (RNQKPEVRKA…ISAPRVGGKR (64 aa)) are disordered. The span at 96 to 117 (QKPEVRKAQREQAIRAAKEAKK) shows a compositional bias: basic and acidic residues. A compositionally biased stretch (low complexity) spans 123–140 (KKPAAPSAKASTKTAQKP).

It belongs to the eukaryotic ribosomal protein eL24 family. Component of the large ribosomal subunit.

The protein localises to the cytoplasm. Component of the large ribosomal subunit. The ribosome is a large ribonucleoprotein complex responsible for the synthesis of proteins in the cell. The protein is Large ribosomal subunit protein eL24 (rpl24) of Pagrus major (Red sea bream).